The following is an 803-amino-acid chain: Zinc finger X-linked protein ZXDB (803 aa).

Disordered regions lie at residues 1-91 (MEIP…GGDD), 120-140 (EAEE…AGPT), and 218-260 (AAHP…GPRG). A compositionally biased stretch (gly residues) spans 13-26 (LQGGGGGGIPAGGG). 10 C2H2-type zinc fingers span residues 271 to 295 (YLCP…LLTH), 304 to 328 (FKCP…LQSH), 334 to 358 (FGCP…MKGH), 364 to 386 (FKCE…QRSH), 393 to 417 (YQCA…NRAH), 424 to 448 (FSCS…LRSH), 454 to 478 (FLCD…KRKH), 484 to 508 (FMCP…SITH), 514 to 538 (FVCP…SKKH), and 547 to 572 (SRCP…VKRH). A required for interaction with ZXDC region spans residues 271 to 577 (YLCPEAQCGQ…MVKRHKVGQD (307 aa)). The tract at residues 576–703 (QDLLAQLEAA…NMDEVSSVSV (128 aa)) is required for transcriptional activation.

The protein belongs to the ZXD family. Self-associates. Interacts with ZXDC and CIITA. As to expression, may be expressed in brain, heart, kidney, liver, lung, muscle and placenta.

The protein localises to the nucleus. Its function is as follows. Cooperates with CIITA to promote transcription of MHC class I and MHC class II genes. In Homo sapiens (Human), this protein is Zinc finger X-linked protein ZXDB (ZXDB).